An 878-amino-acid polypeptide reads, in one-letter code: MTEEYSNLRSNVSLLGQLLGKSIGGHLGEEFLDKIETIRQLSKSSRAGNQQDGVALIDMLTHLSDDELVPVARAFTHFLNLANIAEQFHGISRHCDSGVCAPEPIKDLISKFKNSNLSQQEMQQSVNELKMEMVLTAHPTEITRRTLIHKHIAINDCLSYLEISDISDKERDLLLNRLEQLITQAWHTNDIRQKRPTPVDEAKWGFATIEKSLWQAVPQFIRDLESELQSGLGLSLPLEASPITFTSWMGGDRDGNPFVTAKVTQEVLLSSRWVAVSLYLKDISQLTDELSMDNCDPALRSVVGDNAAEPYRAILRKLRSELKETLASLSATLQNQRSDEKDIITTSKQLKEPLLLCYHSLKNMGMNSIANGLILDILRRLNCFGINLLKLDIRQDAERHGNTLSELTRYLGIGDYNAWNEEDKQAFLLQELNNKRPLFPSQWNPSAEVQEVLDTCKVVAQTDPEALGIYIISMARQASDVLAVQLILKEVGCPFRIPVAPLFETLDDLNNSAAVMKRLFAIDWYRGYINGIQHVMIGYSDSAKDAGVIAANWAQYTSQEALVKLSAENDINLVLFHGRGGTIGRGGAPARQALLSQPPGSLKGGLRVTEQGEMIRFKFGLPKVAVQSLNQYAAAVLEANLLPPPAPKQEWRDVMQQFSDQSCQEYRHFVREEPDFVPYFRSVTPEVELGKLALGSRPSKRKPSGGIESLRAIPWIFAWSQNRLMLPAWLGAGTSLKTLLNEGKKPLLQEMYQHWPFFHTRLEMFEMVFLKADEELTKFYEERLVPKELWPLGQRLRDNLTLTRETVLETIPDHQLMQEQPWIKESISLRNPYVDPLNMLQAELLYRSRENGDEICPVVDQALMVTIAGIAAGLRNTG.

Residues histidine 138 and lysine 544 contribute to the active site.

It belongs to the PEPCase type 1 family. Mg(2+) is required as a cofactor.

The enzyme catalyses oxaloacetate + phosphate = phosphoenolpyruvate + hydrogencarbonate. Functionally, forms oxaloacetate, a four-carbon dicarboxylic acid source for the tricarboxylic acid cycle. The polypeptide is Phosphoenolpyruvate carboxylase (Psychromonas ingrahamii (strain DSM 17664 / CCUG 51855 / 37)).